The following is a 618-amino-acid chain: D-glucuronyl C5-epimerase (618 aa).

The Cytoplasmic segment spans residues 1 to 11 (MRCLAARVNYK). A helical; Signal-anchor for type II membrane protein membrane pass occupies residues 12–29 (TLIIICALFTLVTVLLWN). Residues 30–618 (KCSSDKAIQF…YLKGSRAKHN (589 aa)) lie on the Lumenal side of the membrane. Substrate-binding positions include Tyr-180, 185–187 (RDR), Gln-202, Tyr-210, Gln-213, and Gln-216. The Ca(2+) site is built by Thr-238, Glu-240, Thr-269, Asn-270, and Asp-393. Substrate is bound by residues 430-433 (KLGE), 500-501 (EY), Asn-511, Tyr-515, Tyr-561, Arg-564, and 573-582 (NLARWDYHTT).

It belongs to the D-glucuronyl C5-epimerase family. In terms of assembly, homodimer. Interacts with HS2ST1. Widely expressed with highest levels in lung and lowest levels in spleen.

The protein localises to the golgi apparatus membrane. The enzyme catalyses [heparosan-N-sulfate](n) = [heparan-N-sulfate](n). It functions in the pathway glycan metabolism; heparan sulfate biosynthesis. It participates in glycan metabolism; heparin biosynthesis. Converts D-glucuronic acid residues adjacent to N-sulfate sugar residues to L-iduronic acid residues, both in maturing heparan sulfate (HS) and heparin chains. This is important for further modifications that determine the specificity of interactions between these glycosaminoglycans and proteins. This is D-glucuronyl C5-epimerase (Glce) from Mus musculus (Mouse).